Consider the following 489-residue polypeptide: Protein SIP5 (489 aa).

The interval 1–84 (MGNVPGKIDQ…RKTSREKELA (84 aa)) is disordered. S13 carries the post-translational modification Phosphoserine. Composition is skewed to polar residues over residues 21–32 (SSYNTTSSNSVI) and 51–69 (LVNNILNGNNARTKTGSHL). Phosphothreonine occurs at positions 183 and 433. Residues 419–489 (SNRLIDPSHS…SKNRNTSLRP (71 aa)) are disordered. S436 carries the post-translational modification Phosphoserine. At T438 the chain carries Phosphothreonine. Residues 461–477 (QMVREAIRLSLEDQDNR) are compositionally biased toward basic and acidic residues.

The protein belongs to the SIP5 family. As to quaternary structure, interacts with NPA1, SNF1 and REG1.

It localises to the cytoplasm. May negatively regulate the SNF1 kinase by promoting the interaction of the REG1/GLC7 phosphatase complex with the kinase. Deletion of SIP5 promotes resistance to artemisinin, which is probably an indirect effect of an action on the electron transport chain. The protein is Protein SIP5 (SIP5) of Saccharomyces cerevisiae (strain ATCC 204508 / S288c) (Baker's yeast).